A 75-amino-acid polypeptide reads, in one-letter code: Large ribosomal subunit protein bL31 (75 aa).

The protein belongs to the bacterial ribosomal protein bL31 family. Type A subfamily. Part of the 50S ribosomal subunit.

Its function is as follows. Binds the 23S rRNA. The chain is Large ribosomal subunit protein bL31 from Bradyrhizobium diazoefficiens (strain JCM 10833 / BCRC 13528 / IAM 13628 / NBRC 14792 / USDA 110).